The sequence spans 228 residues: Homeobox-leucine zipper protein ATHB-53 (228 aa).

The disordered stretch occupies residues 36-62 (DGGEESKPVKRRRKRRSKGSSATNEED). The span at 44-53 (VKRRRKRRSK) shows a compositional bias: basic residues. Positions 68 to 127 (GMLRKRKLTDEQVNMLEYSFGNEHKLESGRKEKIAGELGLDPRQVAVWFQNRRARWKNKK) form a DNA-binding region, homeobox. The interval 128–156 (LEEEYAKLKNHHDNVVLGQCQLESQILKL) is leucine-zipper.

Belongs to the HD-ZIP homeobox family. Class I subfamily. In terms of tissue distribution, expressed in root meristem, late flowers and siliques.

The protein resides in the nucleus. Functionally, probable transcription factor that may play a regulatory role in auxin/cytokinin signaling during root development. The sequence is that of Homeobox-leucine zipper protein ATHB-53 (ATHB-53) from Arabidopsis thaliana (Mouse-ear cress).